Consider the following 319-residue polypeptide: Beta-ketoacyl-[acyl-carrier-protein] synthase III (319 aa).

Active-site residues include Cys113 and His246. The segment at Gln247–Arg251 is ACP-binding. Asn276 is a catalytic residue.

Belongs to the thiolase-like superfamily. FabH family. As to quaternary structure, homodimer.

The protein localises to the cytoplasm. It carries out the reaction malonyl-[ACP] + acetyl-CoA + H(+) = 3-oxobutanoyl-[ACP] + CO2 + CoA. It functions in the pathway lipid metabolism; fatty acid biosynthesis. In terms of biological role, catalyzes the condensation reaction of fatty acid synthesis by the addition to an acyl acceptor of two carbons from malonyl-ACP. Catalyzes the first condensation reaction which initiates fatty acid synthesis and may therefore play a role in governing the total rate of fatty acid production. Possesses both acetoacetyl-ACP synthase and acetyl transacylase activities. Its substrate specificity determines the biosynthesis of branched-chain and/or straight-chain of fatty acids. This is Beta-ketoacyl-[acyl-carrier-protein] synthase III from Ehrlichia canis (strain Jake).